We begin with the raw amino-acid sequence, 258 residues long: Hydroxyacylglutathione hydrolase (258 aa).

Zn(2+)-binding residues include His-52, His-54, Asp-56, His-57, His-109, Asp-126, and His-164.

It belongs to the metallo-beta-lactamase superfamily. Glyoxalase II family. Monomer. Requires Zn(2+) as cofactor.

It catalyses the reaction an S-(2-hydroxyacyl)glutathione + H2O = a 2-hydroxy carboxylate + glutathione + H(+). It participates in secondary metabolite metabolism; methylglyoxal degradation; (R)-lactate from methylglyoxal: step 2/2. Its function is as follows. Thiolesterase that catalyzes the hydrolysis of S-D-lactoyl-glutathione to form glutathione and D-lactic acid. The protein is Hydroxyacylglutathione hydrolase of Xylella fastidiosa (strain 9a5c).